Here is a 128-residue protein sequence, read N- to C-terminus: Azurin (128 aa).

The region spanning 1–128 is the Plastocyanin-like domain; sequence AECKVDVDST…SMMKGAVVLK (128 aa). Cys-3 and Cys-26 are joined by a disulfide. Positions 46, 112, 117, and 121 each coordinate Cu cation.

The protein resides in the periplasm. In terms of biological role, transfers electrons from cytochrome c551 to cytochrome oxidase. This Pseudomonas chlororaphis (Pseudomonas aureofaciens) protein is Azurin.